The primary structure comprises 196 residues: Chaperone protein TorD (196 aa).

It belongs to the TorD/DmsD family. TorD subfamily.

The protein resides in the cytoplasm. Functionally, involved in the biogenesis of TorA. Acts on TorA before the insertion of the molybdenum cofactor and, as a result, probably favors a conformation of the apoenzyme that is competent for acquiring the cofactor. This chain is Chaperone protein TorD, found in Pasteurella multocida (strain Pm70).